Consider the following 322-residue polypeptide: tRNA U34 carboxymethyltransferase (322 aa).

Carboxy-S-adenosyl-L-methionine is bound by residues Lys-91, Trp-105, Lys-110, Gly-129, 179–180, Met-195, Tyr-199, and Arg-314; that span reads LE.

Belongs to the class I-like SAM-binding methyltransferase superfamily. CmoB family. As to quaternary structure, homotetramer.

It catalyses the reaction carboxy-S-adenosyl-L-methionine + 5-hydroxyuridine(34) in tRNA = 5-carboxymethoxyuridine(34) in tRNA + S-adenosyl-L-homocysteine + H(+). Its function is as follows. Catalyzes carboxymethyl transfer from carboxy-S-adenosyl-L-methionine (Cx-SAM) to 5-hydroxyuridine (ho5U) to form 5-carboxymethoxyuridine (cmo5U) at position 34 in tRNAs. The polypeptide is tRNA U34 carboxymethyltransferase (Pseudomonas aeruginosa (strain LESB58)).